The chain runs to 190 residues: Probable oligoribonuclease (190 aa).

One can recognise an Exonuclease domain in the interval Met-19 to Leu-181. Tyr-140 is a catalytic residue.

Belongs to the oligoribonuclease family.

Its function is as follows. 3'-to-5' exoribonuclease specific for small oligoribonucleotides. The chain is Probable oligoribonuclease (rexo2-1) from Dictyostelium discoideum (Social amoeba).